Reading from the N-terminus, the 219-residue chain is Ribose-5-phosphate isomerase A (219 aa).

Substrate is bound by residues 28–31 (SGST), 81–84 (DGAD), and 94–97 (KGGG). Residue E103 is the Proton acceptor of the active site. K121 contributes to the substrate binding site.

The protein belongs to the ribose 5-phosphate isomerase family. As to quaternary structure, homodimer.

It carries out the reaction aldehydo-D-ribose 5-phosphate = D-ribulose 5-phosphate. It participates in carbohydrate degradation; pentose phosphate pathway; D-ribose 5-phosphate from D-ribulose 5-phosphate (non-oxidative stage): step 1/1. Catalyzes the reversible conversion of ribose-5-phosphate to ribulose 5-phosphate. The chain is Ribose-5-phosphate isomerase A from Mannheimia succiniciproducens (strain KCTC 0769BP / MBEL55E).